The following is a 1026-amino-acid chain: UPF0182 protein FRAAL6027 (1026 aa).

The next 7 membrane-spanning stretches (helical) occupy residues 13 to 33 (AKVI…VAIF), 60 to 80 (ILLF…NIVL), 108 to 128 (YMKL…GLSA), 167 to 187 (FLLG…VLTH), 208 to 228 (AHIS…YYLD), 250 to 270 (AVLP…VLFI), and 283 to 303 (LGAG…PAFI). The segment covering 877–888 (AAAGAGTGATTT) has biased composition (low complexity). Disordered stretches follow at residues 877–916 (AAAG…LQDA) and 958–1026 (LASP…PPPG). Positions 889-903 (TGGGGQATTQGGGTG) are enriched in gly residues. The span at 970 to 1001 (PTPSRSAAPTTRGTAAGSAPPGTTPAVAAPAG) shows a compositional bias: low complexity. Positions 1016 to 1026 (PQQPRAAPPPG) are enriched in pro residues.

This sequence belongs to the UPF0182 family.

The protein localises to the cell membrane. The protein is UPF0182 protein FRAAL6027 of Frankia alni (strain DSM 45986 / CECT 9034 / ACN14a).